Here is a 403-residue protein sequence, read N- to C-terminus: G-protein coupled receptor family C group 5 member B (403 aa).

Residues 1-28 form the signal peptide; it reads MFVASERKMRAHQVLTFLLLFVITSVAS. At 29-56 the chain is on the extracellular side; sequence ENASTSRGCGLDLLPQYVSLCDLDAIWG. Asn30 is a glycosylation site (N-linked (GlcNAc...) asparagine). Residues 57-77 form a helical membrane-spanning segment; it reads IVVEAVAGAGALITLLLMLIL. At 78–94 the chain is on the cytoplasmic side; that stretch reads LVRLPFIKEKEKKSPVG. Residues 95–115 traverse the membrane as a helical segment; it reads LHFLFLLGTLGLFGLTFAFII. Topologically, residues 116-126 are extracellular; sequence QEDETICSVRR. A helical transmembrane segment spans residues 127-147; sequence FLWGVLFALCFSCLLSQAWRV. The Cytoplasmic segment spans residues 148–162; that stretch reads RRLVRHGTGPAGWQL. The chain crosses the membrane as a helical span at residues 163-183; it reads VGLALCLMLVQVIIAVEWLVL. At 184–199 the chain is on the extracellular side; the sequence is TVLRDTRPACAYEPMD. A helical membrane pass occupies residues 200–220; sequence FVMALIYDMVLLVVTLGLALF. Residues 221-234 are Cytoplasmic-facing; that stretch reads TLCGKFKRWKLNGA. A helical membrane pass occupies residues 235–255; sequence FLLITAFLSVLIWVAWMTMYL. Residues 256–271 lie on the Extracellular side of the membrane; the sequence is FGNVKLQQGDAWNDPT. The helical transmembrane segment at 272–292 threads the bilayer; that stretch reads LAITLAASGWVFVIFHAIPEI. Residues 293–403 lie on the Cytoplasmic side of the membrane; that stretch reads HCTLLPALQE…PPSHTGRHLW (111 aa). A disordered region spans residues 349 to 371; it reads GFPNGSLGKRPSGSLGKRPSAPF. A Phosphoserine modification is found at Ser354.

Belongs to the G-protein coupled receptor 3 family. Expression is high in kidney, pancreas, and testis, medium in brain, heart, prostate, small intestine, and spleen, low in liver, placenta, skeletal muscle, colon, ovary, and thymus, and not detectable in lung and peripheral leukocyte. According to PubMed:10945465, highly expressed in most brain areas examined, with the highest levels observed in corpus callosum, caudate nucleus, putamen, substantia nigra, thalamus, hippocampus, and spinal cord as well as in dorsal root ganglia (DRG). Expressed in glia limitans, ependymal cells, astrocyte cell bodies, the perivascular region in astrocyte endfeet, but not in neurons. In the periphery, expression levels are relatively low, compared to the CNS, with the strongest expression detected in pancreas, testis, uterus, and stomach.

The protein localises to the cell membrane. Its subcellular location is the cytoplasmic vesicle membrane. Functionally, G-protein coupled receptor involved in the regulation of cell volume. The polypeptide is G-protein coupled receptor family C group 5 member B (GPRC5B) (Homo sapiens (Human)).